Here is a 506-residue protein sequence, read N- to C-terminus: (+)-vincadifformine 19-hydroxylase (506 aa).

At 1 to 4 (MELD) the chain is on the lumenal side. Residues 5–25 (ECSPSIFIISFIFIAISIAIL) form a helical membrane-spanning segment. The Cytoplasmic portion of the chain corresponds to 26 to 506 (RRIRPKKTKA…DLHLIPTSYM (481 aa)). Heme is bound at residue Cys450.

This sequence belongs to the cytochrome P450 family. Requires heme as cofactor. Accumulates progressively in roots.

The protein resides in the endoplasmic reticulum membrane. The catalysed reaction is (+)-vincadifformine + reduced [NADPH--hemoprotein reductase] + O2 = (+)-minovincinine + oxidized [NADPH--hemoprotein reductase] + H2O + H(+). It participates in alkaloid biosynthesis. Its activity is regulated as follows. The enantiomer (-)-vincadifformine acts as a competitive inhibitor. In terms of biological role, component of the monoterpenoid indole alkaloids (MIAs, e.g. echitovenine, tabersonine, lochnericine, 19-hydroxytabersonine and horhammericine) biosynthetic pathway; MIAs are used in cancer treatment and other medical applications. Cytochrome P450 catalyzing the hydroxylation of (+)-vincadifformine to (+)-minovincinine. The protein is (+)-vincadifformine 19-hydroxylase of Catharanthus roseus (Madagascar periwinkle).